The primary structure comprises 156 residues: SsrA-binding protein (156 aa).

The protein belongs to the SmpB family.

It is found in the cytoplasm. Required for rescue of stalled ribosomes mediated by trans-translation. Binds to transfer-messenger RNA (tmRNA), required for stable association of tmRNA with ribosomes. tmRNA and SmpB together mimic tRNA shape, replacing the anticodon stem-loop with SmpB. tmRNA is encoded by the ssrA gene; the 2 termini fold to resemble tRNA(Ala) and it encodes a 'tag peptide', a short internal open reading frame. During trans-translation Ala-aminoacylated tmRNA acts like a tRNA, entering the A-site of stalled ribosomes, displacing the stalled mRNA. The ribosome then switches to translate the ORF on the tmRNA; the nascent peptide is terminated with the 'tag peptide' encoded by the tmRNA and targeted for degradation. The ribosome is freed to recommence translation, which seems to be the essential function of trans-translation. This chain is SsrA-binding protein, found in Clostridium botulinum (strain Alaska E43 / Type E3).